The following is a 543-amino-acid chain: T-complex protein 1 subunit gamma (543 aa).

It belongs to the TCP-1 chaperonin family.

The protein localises to the cytoplasm. Functionally, molecular chaperone; assists the folding of proteins upon ATP hydrolysis. Known to play a role, in vitro, in the folding of actin and tubulin. Plays a role in microtubule polymerization. The chain is T-complex protein 1 subunit gamma from Caenorhabditis elegans.